The following is a 483-amino-acid chain: Cobyric acid synthase (483 aa).

The 187-residue stretch at Trp244–Ala430 folds into the GATase cobBQ-type domain. Cys325 (nucleophile) is an active-site residue. His422 is a catalytic residue.

The protein belongs to the CobB/CobQ family. CobQ subfamily.

It participates in cofactor biosynthesis; adenosylcobalamin biosynthesis. In terms of biological role, catalyzes amidations at positions B, D, E, and G on adenosylcobyrinic A,C-diamide. NH(2) groups are provided by glutamine, and one molecule of ATP is hydrogenolyzed for each amidation. This is Cobyric acid synthase from Methylobacillus flagellatus (strain ATCC 51484 / DSM 6875 / VKM B-1610 / KT).